Reading from the N-terminus, the 236-residue chain is Ascorbate-specific transmembrane electron transporter 2 (236 aa).

Topologically, residues 1-13 (MGLGLGVRAAPFT) are cytoplasmic. The chain crosses the membrane as a helical span at residues 14 to 34 (YAAHALAVAAAAMVLVWAIYF). The 205-residue stretch at 15–219 (AAHALAVAAA…FGASVVVAAI (205 aa)) folds into the Cytochrome b561 domain. At 35–50 (RGGLAIEATNKNLIFN) the chain is on the extracellular side. The helical transmembrane segment at 51 to 71 (VHPVLMLIGYIIIGGEAIMVY) threads the bilayer. His-52 contributes to the heme b binding site. 67–75 (AIMVYRVLP) contributes to the L-ascorbate binding site. Over 72-84 (RVLPTSNHETNKL) the chain is Cytoplasmic. A helical membrane pass occupies residues 85–105 (IHLVLHGIALVLGAVGIYFAF). 2 residues coordinate heme b: His-86 and His-120. At 106–122 (KNHNESGIANLYSLHSW) the chain is on the extracellular side. 116–125 (LYSLHSWIGI) provides a ligand contact to monodehydro-L-ascorbate radical. Residues 123 to 143 (IGIGTITLYGIQWIVGFVTFF) form a helical membrane-spanning segment. Topologically, residues 144-153 (FPGAAPNVKK) are cytoplasmic. A helical transmembrane segment spans residues 154-174 (GVLPWHILFGLFVYILALANA). Heme b is bound at residue His-159. Residues 175–201 (ELGFLEKLTFLESSGLDKYGTEAFLVN) are Extracellular-facing. Residues 202–222 (FTALVVVLFGASVVVAAIAPV) traverse the membrane as a helical segment. Topologically, residues 223 to 236 (RLEEPQGYVPIPEN) are cytoplasmic.

Heme b serves as cofactor.

It is found in the membrane. Functionally, two-heme-containing cytochrome. Catalyzes ascorbate-dependent trans-membrane electron transfer by utilizing a concerted H(+)/e(-) transfer mechanism. This chain is Ascorbate-specific transmembrane electron transporter 2, found in Zea mays (Maize).